Reading from the N-terminus, the 347-residue chain is NADH-quinone oxidoreductase subunit H (347 aa).

The next 8 membrane-spanning stretches (helical) occupy residues 14-34, 82-102, 115-135, 161-181, 198-218, 258-278, 285-305, and 321-341; these read IMIG…AYIL, AVFL…WAVI, VGIL…IMGG, IGFV…TDIV, LLDW…ISAL, AIVL…LPPL, WVPG…MFGI, and LGWK…AFVL.

The protein belongs to the complex I subunit 1 family. As to quaternary structure, NDH-1 is composed of 14 different subunits. Subunits NuoA, H, J, K, L, M, N constitute the membrane sector of the complex.

It is found in the cell inner membrane. The enzyme catalyses a quinone + NADH + 5 H(+)(in) = a quinol + NAD(+) + 4 H(+)(out). In terms of biological role, NDH-1 shuttles electrons from NADH, via FMN and iron-sulfur (Fe-S) centers, to quinones in the respiratory chain. The immediate electron acceptor for the enzyme in this species is believed to be ubiquinone. Couples the redox reaction to proton translocation (for every two electrons transferred, four hydrogen ions are translocated across the cytoplasmic membrane), and thus conserves the redox energy in a proton gradient. This subunit may bind ubiquinone. The sequence is that of NADH-quinone oxidoreductase subunit H from Allorhizobium ampelinum (strain ATCC BAA-846 / DSM 112012 / S4) (Agrobacterium vitis (strain S4)).